Reading from the N-terminus, the 570-residue chain is L-ascorbate oxidase (570 aa).

The N-terminal stretch at 1-18 (MGMWWIVAVAILAHTASA) is a signal peptide. Plastocyanin-like domains follow at residues 33-140 (WPDC…IIDV) and 154-317 (FNLL…LNYV). Intrachain disulfides connect Cys36–Cys219, Cys98–Cys557, and Cys197–Cys211. 2 residues coordinate Cu cation: His77 and His79. Asn109 carries N-linked (GlcNAc...) asparagine glycosylation. Residues His121 and His123 each coordinate Cu cation. A glycan (N-linked (GlcNAc...) asparagine) is linked at Asn196. 7 N-linked (GlcNAc...) asparagine glycosylation sites follow: Asn229, Asn343, Asn384, Asn407, Asn434, Asn442, and Asn458. Positions 426 to 543 (RNRNAKQGNV…MGMGVVFAEG (118 aa)) constitute a Plastocyanin-like 3 domain. Residues His463, His466, His468, His525, Cys526, His527, His531, and Met536 each coordinate Cu cation.

The protein belongs to the multicopper oxidase family. In terms of assembly, dimer. It depends on Cu cation as a cofactor.

It is found in the secreted. It catalyses the reaction 4 L-ascorbate + O2 = 4 monodehydro-L-ascorbate radical + 2 H2O. Its pathway is cofactor degradation; L-ascorbate degradation. Its function is as follows. Ascorbate oxidase involved in a redox system involving ascorbic acid (AsA). The oxidation of AsA represses responses to high salinity and oxidative stress conditions such as vegetative growth and seed production reductions. Negative regulator of defense responses toward incompatible Turnip mosaic virus (TuMV strain UK1) by preventing jasmonic acid (JA)- dependent accumulation of ascorbic acid (AsA, AS) and dehydroascobic acid (DHA). The polypeptide is L-ascorbate oxidase (Brassica rapa subsp. pekinensis (Chinese cabbage)).